Here is a 185-residue protein sequence, read N- to C-terminus: Elongation factor P (185 aa).

Belongs to the elongation factor P family.

Its subcellular location is the cytoplasm. It functions in the pathway protein biosynthesis; polypeptide chain elongation. Involved in peptide bond synthesis. Stimulates efficient translation and peptide-bond synthesis on native or reconstituted 70S ribosomes in vitro. Probably functions indirectly by altering the affinity of the ribosome for aminoacyl-tRNA, thus increasing their reactivity as acceptors for peptidyl transferase. This chain is Elongation factor P, found in Bordetella bronchiseptica (strain ATCC BAA-588 / NCTC 13252 / RB50) (Alcaligenes bronchisepticus).